We begin with the raw amino-acid sequence, 275 residues long: MENISKCMERGTTVGTMMVSERFKDQVQIPNTDDNFPEGPPSTKSGVMFTKEDVEYLIGMPIIDFSYYKTAFSYNAIVEGEATYERMEFVGDSVLGFIIARYLYDNFPGKDEGFLSRLRTKFVSGKFLSSIALRMGLHNYVIMHQKGLYRGWNTNPRILEDVFEALMGAIYFDLGINAAKQFFMTTLAKYADMQSLMLDTNYKDRLLKHTRKVELPRPEFVSVFEKGGANPSFIVDVVINGQKISTGTGKSRKDAEQNASKIALHTMGVPEEFIH.

Positions 51 to 175 (KEDVEYLIGM…LMGAIYFDLG (125 aa)) constitute an RNase III domain. One can recognise a DRBM domain in the interval 201 to 269 (NYKDRLLKHT…SKIALHTMGV (69 aa)).

Belongs to the ribonuclease III family.

This Chlorella (PBCV-1) protein is Putative protein A464R.